The sequence spans 383 residues: Acetylornithine deacetylase (383 aa).

His-80 lines the Zn(2+) pocket. Asp-82 is an active-site residue. Asp-112 provides a ligand contact to Zn(2+). The active site involves Glu-144. Zn(2+) is bound by residues Glu-145, Glu-169, and His-355.

It belongs to the peptidase M20A family. ArgE subfamily. In terms of assembly, homodimer. It depends on Zn(2+) as a cofactor. Co(2+) serves as cofactor. Requires glutathione as cofactor.

Its subcellular location is the cytoplasm. It catalyses the reaction N(2)-acetyl-L-ornithine + H2O = L-ornithine + acetate. Its pathway is amino-acid biosynthesis; L-arginine biosynthesis; L-ornithine from N(2)-acetyl-L-ornithine (linear): step 1/1. Functionally, catalyzes the hydrolysis of the amide bond of N(2)-acetylated L-amino acids. Cleaves the acetyl group from N-acetyl-L-ornithine to form L-ornithine, an intermediate in L-arginine biosynthesis pathway, and a branchpoint in the synthesis of polyamines. The sequence is that of Acetylornithine deacetylase from Pectobacterium carotovorum subsp. carotovorum (strain PC1).